The chain runs to 429 residues: Phosphoribosylamine--glycine ligase (429 aa).

Residues 109-316 enclose the ATP-grasp domain; it reads KDFLARHQIP…LVELCLAAID (208 aa). 135 to 196 is an ATP binding site; it reads VREQGAPIVV…EEFLDGEEAS (62 aa). The segment at 212–234 is disordered; the sequence is SQDHKRVGDKDTGPNTGGMGAYS. Residues 213-223 show a composition bias toward basic and acidic residues; it reads QDHKRVGDKDT. The Mg(2+) site is built by glutamate 286 and asparagine 288.

It belongs to the GARS family. Mg(2+) serves as cofactor. Requires Mn(2+) as cofactor.

The enzyme catalyses 5-phospho-beta-D-ribosylamine + glycine + ATP = N(1)-(5-phospho-beta-D-ribosyl)glycinamide + ADP + phosphate + H(+). It functions in the pathway purine metabolism; IMP biosynthesis via de novo pathway; N(1)-(5-phospho-D-ribosyl)glycinamide from 5-phospho-alpha-D-ribose 1-diphosphate: step 2/2. In Vibrio vulnificus (strain YJ016), this protein is Phosphoribosylamine--glycine ligase.